Consider the following 338-residue polypeptide: D-erythrose-4-phosphate dehydrogenase (338 aa).

Position 12–13 (12–13 (RI)) interacts with NAD(+). Substrate contacts are provided by residues 154-156 (SCT), R200, 213-214 (TK), and R236. Catalysis depends on C155, which acts as the Nucleophile. N318 is an NAD(+) binding site.

It belongs to the glyceraldehyde-3-phosphate dehydrogenase family. Epd subfamily. In terms of assembly, homotetramer.

Its subcellular location is the cytoplasm. It catalyses the reaction D-erythrose 4-phosphate + NAD(+) + H2O = 4-phospho-D-erythronate + NADH + 2 H(+). Its pathway is cofactor biosynthesis; pyridoxine 5'-phosphate biosynthesis; pyridoxine 5'-phosphate from D-erythrose 4-phosphate: step 1/5. Functionally, catalyzes the NAD-dependent conversion of D-erythrose 4-phosphate to 4-phosphoerythronate. The protein is D-erythrose-4-phosphate dehydrogenase of Yersinia enterocolitica serotype O:8 / biotype 1B (strain NCTC 13174 / 8081).